Reading from the N-terminus, the 289-residue chain is tRNA pseudouridine synthase B (289 aa).

The active-site Nucleophile is the aspartate 38.

This sequence belongs to the pseudouridine synthase TruB family. Type 1 subfamily.

The catalysed reaction is uridine(55) in tRNA = pseudouridine(55) in tRNA. Responsible for synthesis of pseudouridine from uracil-55 in the psi GC loop of transfer RNAs. This Acaryochloris marina (strain MBIC 11017) protein is tRNA pseudouridine synthase B.